We begin with the raw amino-acid sequence, 179 residues long: Orotate phosphoribosyltransferase (179 aa).

5-phospho-alpha-D-ribose 1-diphosphate is bound by residues Arg94, Lys95, Lys98, His100, and 120–128 (EDTSTTGNS). Residues Thr124 and Arg152 each coordinate orotate.

It belongs to the purine/pyrimidine phosphoribosyltransferase family. PyrE subfamily. Homodimer. Mg(2+) serves as cofactor.

It catalyses the reaction orotidine 5'-phosphate + diphosphate = orotate + 5-phospho-alpha-D-ribose 1-diphosphate. It participates in pyrimidine metabolism; UMP biosynthesis via de novo pathway; UMP from orotate: step 1/2. Catalyzes the transfer of a ribosyl phosphate group from 5-phosphoribose 1-diphosphate to orotate, leading to the formation of orotidine monophosphate (OMP). This is Orotate phosphoribosyltransferase from Mycobacterium bovis (strain ATCC BAA-935 / AF2122/97).